Reading from the N-terminus, the 140-residue chain is uncharacterized protein (140 aa).

This is an uncharacterized protein from Homo sapiens (Human).